An 804-amino-acid polypeptide reads, in one-letter code: Phenylalanine--tRNA ligase beta subunit (804 aa).

A tRNA-binding domain is found at 39-147 (GPSFSNVVVA…PNLPLGEDLA (109 aa)). Positions 402-480 (ETVGEIHLRC…RIHGYDNIPV (79 aa)) constitute a B5 domain. Mg(2+) is bound by residues aspartate 458, aspartate 464, glutamate 467, and glutamate 468. The region spanning 711–804 (SRYPESSRDV…IIDQTGARVR (94 aa)) is the FDX-ACB domain.

This sequence belongs to the phenylalanyl-tRNA synthetase beta subunit family. Type 1 subfamily. As to quaternary structure, tetramer of two alpha and two beta subunits. Requires Mg(2+) as cofactor.

It localises to the cytoplasm. It carries out the reaction tRNA(Phe) + L-phenylalanine + ATP = L-phenylalanyl-tRNA(Phe) + AMP + diphosphate + H(+). In Syntrophus aciditrophicus (strain SB), this protein is Phenylalanine--tRNA ligase beta subunit.